We begin with the raw amino-acid sequence, 1037 residues long: Presequence protease, mitochondrial (1037 aa).

A mitochondrion-targeting transit peptide spans 1–28 (MWRCGGRQGLCVLRRLSGGHAHHRAWRW). His104 provides a ligand contact to Zn(2+). Glu107 (proton acceptor) is an active-site residue. His108 serves as a coordination point for Zn(2+). Cys119 and Cys556 are oxidised to a cystine. Glu180 is a catalytic residue. Residue Glu205 coordinates Zn(2+). Position 759 is an N6-acetyllysine (Lys759). Lys770 carries the post-translational modification N6-acetyllysine; alternate. Lys770 bears the N6-succinyllysine; alternate mark. Basic residues predominate over residues 804-814 (GRSKKERRPVR). The tract at residues 804–834 (GRSKKERRPVRPHTVEKPVPSSSGGDAHVPH) is disordered. Lys849 is subject to N6-succinyllysine. The residue at position 884 (Lys884) is an N6-acetyllysine. Lys946 bears the N6-succinyllysine mark.

Belongs to the peptidase M16 family. PreP subfamily. In terms of assembly, monomer and homodimer; homodimerization is induced by binding of the substrate. Requires Zn(2+) as cofactor. In terms of processing, a disulfide bond locks the enzyme in the closed conformation preventing substrate entry into the catalytic chamber. As to expression, widely expressed. Expressed at higher level in muscle and heart compared to brain, pancreas, liver, lung and placenta.

Its subcellular location is the mitochondrion. It localises to the mitochondrion matrix. Its activity is regulated as follows. Mainly exists in a closed and catalytically competent conformation but a closed-to-open switch allows substrate entry into the catalytic chamber. Substrate binding induces closure and dimerization. A disulfide bond may lock the enzyme in a closed conformation preventing substrate entry into the catalytic chamber, participating in redox regulation of the enzyme. Inhibited by metal-chelating agents. Inhibited by nickel and zinc excess, and slightly activated by manganese. Metalloendopeptidase of the mitochondrial matrix that functions in peptide cleavage and degradation rather than in protein processing. Has an ATP-independent activity. Specifically cleaves peptides in the range of 5 to 65 residues. Shows a preference for cleavage after small polar residues and before basic residues, but without any positional preference. Degrades the transit peptides of mitochondrial proteins after their cleavage. Also degrades other unstructured peptides. It is also able to degrade amyloid-beta protein 40, one of the peptides produced by APP processing, when it accumulates in mitochondrion. It is a highly efficient protease, at least toward amyloid-beta protein 40. Cleaves that peptide at a specific position and is probably not processive, releasing digested peptides intermediates that can be further cleaved subsequently. It is also able to degrade amyloid-beta protein 42. The sequence is that of Presequence protease, mitochondrial from Homo sapiens (Human).